The primary structure comprises 834 residues: Striatin-interacting protein 2 (834 aa).

The tract at residues 1-48 (MEDPAAPGTGGPPANGNGNGGGKGKQAAPKGREAFRSQRRESEGSVDC) is disordered. Gly residues predominate over residues 8–24 (GTGGPPANGNGNGGGKG). The span at 30 to 43 (KGREAFRSQRRESE) shows a compositional bias: basic and acidic residues. Residues S318, S329, and S354 each carry the phosphoserine modification. Residues 321–345 (SYTLDLGESQLAPPPSKLRGRRGSR) form a disordered region. Residues 360-382 (ERDLFKTEEPATEEEEESAGDGE) are disordered. Over residues 369–379 (PATEEEEESAG) the composition is skewed to acidic residues.

The protein belongs to the STRIP family. In terms of assembly, part of the core of STRIPAK complexes composed of PP2A catalytic and scaffolding subunits, the striatins (PP2A regulatory subunits), the striatin-associated proteins MOB4, STRIP1 and STRIP2, PDCD10 and members of the STE20 kinases, such as STK24 and STK26. Interacts with CTTNBP2NL.

It is found in the cytoplasm. Its function is as follows. Plays a role in the regulation of cell morphology and cytoskeletal organization. Required in the control of cell shape. Calmodulin-binding scaffolding protein which is the center of the striatin-interacting phosphatase and kinase (STRIPAK) complexes. STRIPAK complexes have critical roles in protein (de)phosphorylation and are regulators of multiple signaling pathways including Hippo, MAPK, nuclear receptor and cytoskeleton remodeling. Different types of STRIPAK complexes are involved in a variety of biological processes such as cell growth, differentiation, apoptosis, metabolism and immune regulation. This is Striatin-interacting protein 2 from Homo sapiens (Human).